Reading from the N-terminus, the 84-residue chain is Cell division topological specificity factor (84 aa).

This sequence belongs to the MinE family.

Prevents the cell division inhibition by proteins MinC and MinD at internal division sites while permitting inhibition at polar sites. This ensures cell division at the proper site by restricting the formation of a division septum at the midpoint of the long axis of the cell. The chain is Cell division topological specificity factor from Paraburkholderia phymatum (strain DSM 17167 / CIP 108236 / LMG 21445 / STM815) (Burkholderia phymatum).